We begin with the raw amino-acid sequence, 134 residues long: Small ribosomal subunit protein bS6 (134 aa).

Positions 99–134 are disordered; the sequence is PSQLAKSADEKRARKAPRSENFDNDQDDESNDDSDE. Over residues 105-119 the composition is skewed to basic and acidic residues; it reads SADEKRARKAPRSEN. Residues 120 to 134 show a composition bias toward acidic residues; the sequence is FDNDQDDESNDDSDE.

The protein belongs to the bacterial ribosomal protein bS6 family.

Binds together with bS18 to 16S ribosomal RNA. This chain is Small ribosomal subunit protein bS6, found in Psychrobacter sp. (strain PRwf-1).